Consider the following 352-residue polypeptide: UDP-N-acetylglucosamine--N-acetylmuramyl-(pentapeptide) pyrophosphoryl-undecaprenol N-acetylglucosamine transferase (352 aa).

UDP-N-acetyl-alpha-D-glucosamine is bound by residues 11–13 (TGG), N120, R161, S188, and Q286.

This sequence belongs to the glycosyltransferase 28 family. MurG subfamily.

The protein resides in the cell inner membrane. It carries out the reaction di-trans,octa-cis-undecaprenyl diphospho-N-acetyl-alpha-D-muramoyl-L-alanyl-D-glutamyl-meso-2,6-diaminopimeloyl-D-alanyl-D-alanine + UDP-N-acetyl-alpha-D-glucosamine = di-trans,octa-cis-undecaprenyl diphospho-[N-acetyl-alpha-D-glucosaminyl-(1-&gt;4)]-N-acetyl-alpha-D-muramoyl-L-alanyl-D-glutamyl-meso-2,6-diaminopimeloyl-D-alanyl-D-alanine + UDP + H(+). Its pathway is cell wall biogenesis; peptidoglycan biosynthesis. In terms of biological role, cell wall formation. Catalyzes the transfer of a GlcNAc subunit on undecaprenyl-pyrophosphoryl-MurNAc-pentapeptide (lipid intermediate I) to form undecaprenyl-pyrophosphoryl-MurNAc-(pentapeptide)GlcNAc (lipid intermediate II). The sequence is that of UDP-N-acetylglucosamine--N-acetylmuramyl-(pentapeptide) pyrophosphoryl-undecaprenol N-acetylglucosamine transferase from Prochlorococcus marinus (strain NATL2A).